The chain runs to 235 residues: Transmembrane protein 215 (235 aa).

A run of 2 helical transmembrane segments spans residues 12-32 (LVVALVSVFLVFGFMFTVSGM) and 40-60 (IPLLAIGPAICLPGIAAIALA). Positions 99 to 145 (SDLESGKGSSDELAKKAGLRGKPPPQSQGEVSVASSINSPTPTEEGE) are disordered. Residues 125–140 (SQGEVSVASSINSPTP) show a composition bias toward polar residues.

Its subcellular location is the membrane. The chain is Transmembrane protein 215 (TMEM215) from Homo sapiens (Human).